The following is a 125-amino-acid chain: Large ribosomal subunit protein bL12 (125 aa).

It belongs to the bacterial ribosomal protein bL12 family. Homodimer. Part of the ribosomal stalk of the 50S ribosomal subunit. Forms a multimeric L10(L12)X complex, where L10 forms an elongated spine to which 2 to 4 L12 dimers bind in a sequential fashion. Binds GTP-bound translation factors.

Forms part of the ribosomal stalk which helps the ribosome interact with GTP-bound translation factors. Is thus essential for accurate translation. The sequence is that of Large ribosomal subunit protein bL12 from Endomicrobium trichonymphae.